Reading from the N-terminus, the 475-residue chain is Transmembrane protein 181 (475 aa).

The next 9 helical transmembrane spans lie at 16 to 36 (HFVLVFVVFFICFGLTIFVGI), 131 to 151 (EIIVAHLGYLNYTQYTVIVGF), 175 to 195 (LEIWFRFFFVVLTFIVTCLFA), 214 to 234 (SVLLPLLLLYNDPFFPLSFLV), 245 to 265 (LFQSMFLCALLLFWLCVYHGI), 276 to 296 (FYLPKFFIVGLLWLASVTLGI), 320 to 340 (MKVFFMVVAAVYILYLLFLIV), 356 to 376 (LKFLTALTFVVLVISIAILYL), and 401 to 421 (FLSFYGLLNFYLYTLAFVYSP). Ser-443 carries the post-translational modification Phosphoserine.

This sequence belongs to the TMEM181 family. In terms of assembly, interacts with cytolethal distending toxin.

It localises to the membrane. Functionally, mediates action of cytolethal distending toxins (CDT), which are secreted by many pathogenic bacteria. Expression level of TMEM181 is rate-limiting for intoxication. The sequence is that of Transmembrane protein 181 (TMEM181) from Homo sapiens (Human).